We begin with the raw amino-acid sequence, 330 residues long: Phosphate acyltransferase (330 aa).

The protein belongs to the PlsX family. In terms of assembly, homodimer. Probably interacts with PlsY.

The protein resides in the cytoplasm. The enzyme catalyses a fatty acyl-[ACP] + phosphate = an acyl phosphate + holo-[ACP]. The protein operates within lipid metabolism; phospholipid metabolism. Its function is as follows. Catalyzes the reversible formation of acyl-phosphate (acyl-PO(4)) from acyl-[acyl-carrier-protein] (acyl-ACP). This enzyme utilizes acyl-ACP as fatty acyl donor, but not acyl-CoA. The protein is Phosphate acyltransferase of Streptococcus pneumoniae (strain 70585).